A 515-amino-acid polypeptide reads, in one-letter code: Integrator complex subunit 14 (515 aa).

Positions 2-204 (PTVVVMDVSL…KNVQSMFGKL (203 aa)) constitute a VWFA domain. Ser-10, Ser-12, and Thr-86 together coordinate Mg(2+). Lys-418 carries the post-translational modification N6-acetyllysine.

It belongs to the Integrator subunit 14 family. In terms of assembly, component of the Integrator complex, composed of core subunits INTS1, INTS2, INTS3, INTS4, INTS5, INTS6, INTS7, INTS8, INTS9/RC74, INTS10, INTS11/CPSF3L, INTS12, INTS13, INTS14 and INTS15. The core complex associates with protein phosphatase 2A subunits PPP2CA and PPP2R1A, to form the Integrator-PP2A (INTAC) complex. INTS14 is part of the tail subcomplex, composed of INTS10, INTS13, INTS14 and INTS15.

It is found in the nucleus. Its function is as follows. Component of the integrator complex, a multiprotein complex that terminates RNA polymerase II (Pol II) transcription in the promoter-proximal region of genes. The integrator complex provides a quality checkpoint during transcription elongation by driving premature transcription termination of transcripts that are unfavorably configured for transcriptional elongation: the complex terminates transcription by (1) catalyzing dephosphorylation of the C-terminal domain (CTD) of Pol II subunit POLR2A/RPB1 and SUPT5H/SPT5, (2) degrading the exiting nascent RNA transcript via endonuclease activity and (3) promoting the release of Pol II from bound DNA. The integrator complex is also involved in terminating the synthesis of non-coding Pol II transcripts, such as enhancer RNAs (eRNAs), small nuclear RNAs (snRNAs), telomerase RNAs and long non-coding RNAs (lncRNAs). Within the integrator complex, INTS14 is part of the integrator tail module that acts as a platform for the recruitment of transcription factors at promoters. The protein is Integrator complex subunit 14 of Rattus norvegicus (Rat).